The sequence spans 127 residues: S1-like domain-containing protein C146.08c (127 aa).

The region spanning 10-86 is the S1-like domain; it reads SFDPPARLEK…NKIDGTILYV (77 aa). The interval 107-127 is disordered; it reads ESLNQNDSEESSSSEEEYDSD. Residues 113–127 are compositionally biased toward acidic residues; the sequence is DSEESSSSEEEYDSD. Tyr-124 bears the Phosphotyrosine mark. Ser-126 bears the Phosphoserine mark.

Belongs to the EIF1AD family.

Its subcellular location is the cytoplasm. The protein resides in the nucleus. This Schizosaccharomyces pombe (strain 972 / ATCC 24843) (Fission yeast) protein is S1-like domain-containing protein C146.08c.